The primary structure comprises 408 residues: Arginine biosynthesis bifunctional protein ArgJ (408 aa).

Substrate contacts are provided by Thr156, Lys182, Thr193, Glu279, Asn403, and Ser408. Thr193 (nucleophile) is an active-site residue.

It belongs to the ArgJ family. Heterotetramer of two alpha and two beta chains.

The protein localises to the cytoplasm. The enzyme catalyses N(2)-acetyl-L-ornithine + L-glutamate = N-acetyl-L-glutamate + L-ornithine. The catalysed reaction is L-glutamate + acetyl-CoA = N-acetyl-L-glutamate + CoA + H(+). The protein operates within amino-acid biosynthesis; L-arginine biosynthesis; L-ornithine and N-acetyl-L-glutamate from L-glutamate and N(2)-acetyl-L-ornithine (cyclic): step 1/1. Its pathway is amino-acid biosynthesis; L-arginine biosynthesis; N(2)-acetyl-L-ornithine from L-glutamate: step 1/4. Functionally, catalyzes two activities which are involved in the cyclic version of arginine biosynthesis: the synthesis of N-acetylglutamate from glutamate and acetyl-CoA as the acetyl donor, and of ornithine by transacetylation between N(2)-acetylornithine and glutamate. In Dechloromonas aromatica (strain RCB), this protein is Arginine biosynthesis bifunctional protein ArgJ.